A 150-amino-acid chain; its full sequence is Large ribosomal subunit protein eL19 (150 aa).

Residues 59 to 89 (SRYRARIRHEQKKKGRHRGPGSRKGKKTARM) are disordered. The segment covering 61–89 (YRARIRHEQKKKGRHRGPGSRKGKKTARM) has biased composition (basic residues).

It belongs to the eukaryotic ribosomal protein eL19 family. In terms of assembly, part of the 50S ribosomal subunit.

In terms of biological role, binds to the 23S rRNA. The protein is Large ribosomal subunit protein eL19 of Pyrococcus horikoshii (strain ATCC 700860 / DSM 12428 / JCM 9974 / NBRC 100139 / OT-3).